We begin with the raw amino-acid sequence, 292 residues long: Acetyl-coenzyme A carboxylase carboxyl transferase subunit beta (292 aa).

In terms of domain architecture, CoA carboxyltransferase N-terminal spans 23 to 292 (VWSKCTACGN…TEATEVSVNE (270 aa)). Positions 27, 30, 46, and 49 each coordinate Zn(2+). The segment at 27–49 (CTACGNIIYKADLERSLNVCPKC) adopts a C4-type zinc-finger fold.

Belongs to the AccD/PCCB family. Acetyl-CoA carboxylase is a heterohexamer composed of biotin carboxyl carrier protein (AccB), biotin carboxylase (AccC) and two subunits each of ACCase subunit alpha (AccA) and ACCase subunit beta (AccD). Zn(2+) is required as a cofactor.

It is found in the cytoplasm. The enzyme catalyses N(6)-carboxybiotinyl-L-lysyl-[protein] + acetyl-CoA = N(6)-biotinyl-L-lysyl-[protein] + malonyl-CoA. It participates in lipid metabolism; malonyl-CoA biosynthesis; malonyl-CoA from acetyl-CoA: step 1/1. Functionally, component of the acetyl coenzyme A carboxylase (ACC) complex. Biotin carboxylase (BC) catalyzes the carboxylation of biotin on its carrier protein (BCCP) and then the CO(2) group is transferred by the transcarboxylase to acetyl-CoA to form malonyl-CoA. This Idiomarina loihiensis (strain ATCC BAA-735 / DSM 15497 / L2-TR) protein is Acetyl-coenzyme A carboxylase carboxyl transferase subunit beta.